The following is a 690-amino-acid chain: Kelch-like protein 8 (690 aa).

Residues 111 to 178 enclose the BTB domain; sequence CDVELLVAGS…IYTDKIAITM (68 aa). A BACK domain is found at 213–314; that stretch reads CMSLYHFSDI…VGWNFLCEAV (102 aa). Kelch repeat units follow at residues 383-430, 431-477, 478-524, 525-571, 572-618, and 620-665; these read AIFC…SANG, NLYA…SIEN, VIYA…VIGR, YLFA…VLDG, YLYA…ALGG, and VYAI…WANV.

As to quaternary structure, component of the BCR(kel-8) E3 ubiquitin ligase complex, at least composed of cul-3, kel-8 and rbx-1. Interacts with rpy-1. As to expression, expressed in neurons.

It is found in the synapse. It participates in protein modification; protein ubiquitination. Its function is as follows. Substrate-specific adapter of a BCR (BTB-CUL3-RBX1) E3 ubiquitin ligase complex that regulates degradation of glutamate receptors in neurons. The BCR(kel-8) ubiquitin ligase complex mediates ubiquitination and subsequent degradation of rpy-1. Indirectly regulates the protein turnover of glr-1, possibly via ubiquitination and degradation of rpy-1. This Caenorhabditis elegans protein is Kelch-like protein 8 (kel-8).